The chain runs to 177 residues: Austinoid biosynthesis clusters protein F (177 aa).

This sequence belongs to the trt14 isomerase family. In terms of assembly, homodimer.

Its pathway is secondary metabolite biosynthesis; terpenoid biosynthesis. Part of the gene cluster B that mediates the biosynthesis of austinol and dehydroaustinol, two fungal meroterpenoids. The first step of the pathway is the synthesis of 3,5-dimethylorsellinic acid by the polyketide synthase ausA. 3,5-dimethylorsellinic acid is then prenylated by the polyprenyl transferase ausN. Further epoxidation by the FAD-dependent monooxygenase ausM and cyclization by the probable terpene cyclase ausL lead to the formation of protoaustinoid A. Protoaustinoid A is then oxidized to spiro-lactone preaustinoid A3 by the combined action of the FAD-binding monooxygenases ausB and ausC, and the dioxygenase ausE. Acid-catalyzed keto-rearrangement and ring contraction of the tetraketide portion of preaustinoid A3 by ausJ lead to the formation of preaustinoid A4. The aldo-keto reductase ausK, with the help of ausH, is involved in the next step by transforming preaustinoid A4 into isoaustinone which is in turn hydroxylated by the P450 monooxygenase ausI to form austinolide. Finally, the cytochrome P450 monooxygenase ausG modifies austinolide to austinol. Austinol can be further modified to dehydroaustinol which forms a diffusible complex with diorcinol that initiates conidiation. Due to genetic rearrangements of the clusters and the subsequent loss of some enzymes, the end products of the Emericella nidulans austinoid biosynthesis clusters are austinol and dehydroaustinol, even if additional enzymes, such as the O-acetyltransferase ausQ and the cytochrome P450 monooxygenase ausR are still functional. This is Austinoid biosynthesis clusters protein F from Emericella nidulans (strain FGSC A4 / ATCC 38163 / CBS 112.46 / NRRL 194 / M139) (Aspergillus nidulans).